Consider the following 756-residue polypeptide: Serine/threonine-protein kinase CBK1 (756 aa).

2 disordered regions span residues 1 to 180 (MYNS…SYSS) and 242 to 261 (QQQQ…NNGT). Over residues 23–34 (QQQDQQHQQQQQ) the composition is skewed to low complexity. The span at 53 to 77 (FSSNYMKEQGSHQSLQEHLQRETGN) shows a compositional bias: polar residues. Thr-109 is subject to Phosphothreonine. Residues 120–180 (HNNNSQSMVQ…TLRSNGSYSS (61 aa)) show a composition bias toward polar residues. Low complexity predominate over residues 242 to 255 (QQQQQQQSQSPVQS). The Protein kinase domain maps to 352 to 672 (FHTVKVIGKG…ADEIKSHPFF (321 aa)). ATP-binding positions include 358-366 (IGKGAFGEV) and Lys-381. The active-site Proton acceptor is Asp-475. Residues 673–754 (RGVDWNTIRQ…SRFDYLTRKN (82 aa)) enclose the AGC-kinase C-terminal domain. The segment at 707 to 732 (NVPDSPAMAQAAKQREQMTKQGGSAP) is disordered.

This sequence belongs to the protein kinase superfamily. STE Ser/Thr protein kinase family. COT1 subfamily. As to quaternary structure, associates with PAG1/TAO3 and interacts with MOB2.

The enzyme catalyses L-seryl-[protein] + ATP = O-phospho-L-seryl-[protein] + ADP + H(+). The catalysed reaction is L-threonyl-[protein] + ATP = O-phospho-L-threonyl-[protein] + ADP + H(+). In terms of biological role, protein kinase that seems to play a role in the regulation of cell morphogenesis and proliferation. This Saccharomyces cerevisiae (strain ATCC 204508 / S288c) (Baker's yeast) protein is Serine/threonine-protein kinase CBK1 (CBK1).